The following is a 393-amino-acid chain: MSEPFMFEKPLGMRDVLPNLHSMQRKLGDRVLQEFRLWGYEQVQTPTLEYYETVGKASAISDKQLFKLIDFHGNTLVLRPDMTAPIARLVSSSMKDIPYPLRLSYCSSLYRALQTEGGRPAEFAQVGVELVGDHTASADGEMLLLLNRALIQAGLDHFQVAVGHIGFLNALFLEIFGTVERAELLRRQLYEKNDVGFKEQVKAFGLSSIDEKKLLKLSRLRGNEAILAEAEQLTESAEGKQAVAELRDLWQGLKEGGLTRYMKLDLSLVLHMSYYTGCIFEVYHDRLPRPLGGGGRYDHLLAKFGRPGPATGFGLRLDLLAEAVGKLEVQPKKRCLLYSRERRQEAYRKATALREKGMQVVLQDVAGVDDIDKMSASYEEIVYLIGKTEEGKR.

It belongs to the class-II aminoacyl-tRNA synthetase family. HisZ subfamily. As to quaternary structure, heteromultimer composed of HisG and HisZ subunits.

Its subcellular location is the cytoplasm. Its pathway is amino-acid biosynthesis; L-histidine biosynthesis; L-histidine from 5-phospho-alpha-D-ribose 1-diphosphate: step 1/9. Required for the first step of histidine biosynthesis. May allow the feedback regulation of ATP phosphoribosyltransferase activity by histidine. This chain is ATP phosphoribosyltransferase regulatory subunit, found in Shouchella clausii (strain KSM-K16) (Alkalihalobacillus clausii).